A 202-amino-acid chain; its full sequence is Na(+)-translocating NADH-quinone reductase subunit E (202 aa).

The next 6 helical transmembrane spans lie at 11-31 (AIFV…FLAI), 35-55 (IEAA…TVPV), 81-101 (FLGL…MEMV), 114-134 (GVFL…LFMV), 144-164 (LVYG…LAGI), and 180-200 (LGIT…FSGI).

The protein belongs to the NqrDE/RnfAE family. In terms of assembly, composed of six subunits; NqrA, NqrB, NqrC, NqrD, NqrE and NqrF.

It localises to the cell inner membrane. The catalysed reaction is a ubiquinone + n Na(+)(in) + NADH + H(+) = a ubiquinol + n Na(+)(out) + NAD(+). Functionally, NQR complex catalyzes the reduction of ubiquinone-1 to ubiquinol by two successive reactions, coupled with the transport of Na(+) ions from the cytoplasm to the periplasm. NqrA to NqrE are probably involved in the second step, the conversion of ubisemiquinone to ubiquinol. The protein is Na(+)-translocating NADH-quinone reductase subunit E of Marinobacter nauticus (strain ATCC 700491 / DSM 11845 / VT8) (Marinobacter aquaeolei).